The chain runs to 487 residues: MGDPGSLVTEGRAGERSWCLRRVGMNTEWLLLEDGNEVTVGRGFGVTYQLVSKICPLMISRNHCILKQNAEGQWTIKDNKSLNGVWLNRERLEPLKVYSIHKGDHIQLGVPLENKENAEYEYEVTEEDWERIYPCLSPKSDQMMEKNKGLRTKRKFSLDELEGSGAEGPSNLKSKISKLSCEPGQQVKSHGKGKVASQPSEYLDPKLTSFEPSVKTTGAHVNPGPAKVIELLRKKKKASNPSASQSSLELFKVTMSRILMLKTQMQEKQVAVLNVKKQTKKGSSKKIVKMEQELQDLQSQLCAEQAQQQARVEQLEKTIQEEQQHLEGLEKEEGEEDLKQQLAQALQEYRSLVEELNRSKKNFEAIIQAKDKELEQTKEEKEKVQAQKEEVLSHMNDVLENELQCIICSEYFVEAVTLNCAHSFCSYCINEWMKRKVECPICRKDIKSKTRSLVLDNCISKMVDNLNSEVKERRIVLIRERKGKRLF.

One can recognise an FHA domain in the interval 38–92 (VTVGRGFGVTYQLVSKICPLMISRNHCILKQNAEGQWTIKDNKSLNGVWLNRERL). A required for interaction with PIWIL1 region spans residues 68–72 (QNAEG). 2 disordered regions span residues 143–176 (MMEK…KSKI) and 182–201 (EPGQ…QPSE). The residue at position 157 (serine 157) is a Phosphoserine. The segment at 405–443 (CIICSEYFVEAVTLNCAHSFCSYCINEWMKRKVECPICR) adopts an RING-type zinc-finger fold.

It belongs to the RNF8 family. In terms of assembly, homodimer. Forms a E2-E3 ubiquitin ligase complex composed of the RNF8 homodimer and a E2 heterodimer of UBE2N and UBE2V2. Interacts with class III E2s, including UBE2E1, UBE2E2, and UBE2E3 and with UBE2N. Interacts with RXRA. Interacts (via FHA domain) with phosphorylated HERC2 (via C-terminus). Interacts with PIWIL1; leading to sequester RNF8 in the cytoplasm. Interacts with WRAP53/TCAB1. Post-translationally, autoubiquitinated through 'Lys-48' and 'Lys-63' of ubiquitin. 'Lys-63' polyubiquitination is mediated by UBE2N. 'Lys-29'-type polyubiquitination is also observed, but it doesn't require its own functional RING-type zinc finger.

The protein localises to the nucleus. The protein resides in the cytoplasm. It is found in the midbody. Its subcellular location is the chromosome. It localises to the telomere. It carries out the reaction S-ubiquitinyl-[E2 ubiquitin-conjugating enzyme]-L-cysteine + [acceptor protein]-L-lysine = [E2 ubiquitin-conjugating enzyme]-L-cysteine + N(6)-ubiquitinyl-[acceptor protein]-L-lysine.. Its pathway is protein modification; protein ubiquitination. E3 ubiquitin-protein ligase that plays a key role in DNA damage signaling via 2 distinct roles: by mediating the 'Lys-63'-linked ubiquitination of histones H2A and H2AX and promoting the recruitment of DNA repair proteins at double-strand breaks (DSBs) sites, and by catalyzing 'Lys-48'-linked ubiquitination to remove target proteins from DNA damage sites. Following DNA DSBs, it is recruited to the sites of damage by ATM-phosphorylated MDC1 and catalyzes the 'Lys-63'-linked ubiquitination of histones H2A and H2AX, thereby promoting the formation of TP53BP1 and BRCA1 ionizing radiation-induced foci (IRIF). Also controls the recruitment of UIMC1-BRCC3 (RAP80-BRCC36) and PAXIP1/PTIP to DNA damage sites. Promotes the recruitment of NBN to DNA damage sites by catalyzing 'Lys-6'-linked ubiquitination of NBN. Also recruited at DNA interstrand cross-links (ICLs) sites and catalyzes 'Lys-63'-linked ubiquitination of histones H2A and H2AX, leading to recruitment of FAAP20 and Fanconi anemia (FA) complex, followed by interstrand cross-link repair. H2A ubiquitination also mediates the ATM-dependent transcriptional silencing at regions flanking DSBs in cis, a mechanism to avoid collision between transcription and repair intermediates. Promotes the formation of 'Lys-63'-linked polyubiquitin chains via interactions with the specific ubiquitin-conjugating UBE2N/UBC13 and ubiquitinates non-histone substrates such as PCNA. Substrates that are polyubiquitinated at 'Lys-63' are usually not targeted for degradation. Also catalyzes the formation of 'Lys-48'-linked polyubiquitin chains via interaction with the ubiquitin-conjugating UBE2L6/UBCH8, leading to degradation of substrate proteins such as CHEK2, JMJD2A/KDM4A and KU80/XRCC5: it is still unclear how the preference toward 'Lys-48'- versus 'Lys-63'-linked ubiquitination is regulated but it could be due to RNF8 ability to interact with specific E2 specific ligases. For instance, interaction with phosphorylated HERC2 promotes the association between RNF8 and UBE2N/UBC13 and favors the specific formation of 'Lys-63'-linked ubiquitin chains. Promotes non-homologous end joining (NHEJ) by promoting the 'Lys-48'-linked ubiquitination and degradation the of KU80/XRCC5. Following DNA damage, mediates the ubiquitination and degradation of JMJD2A/KDM4A in collaboration with RNF168, leading to unmask H4K20me2 mark and promote the recruitment of TP53BP1 at DNA damage sites. Following DNA damage, mediates the ubiquitination and degradation of POLD4/p12, a subunit of DNA polymerase delta. In the absence of POLD4, DNA polymerase delta complex exhibits higher proofreading activity. In addition to its function in damage signaling, also plays a role in higher-order chromatin structure by mediating extensive chromatin decondensation. Involved in the activation of ATM by promoting histone H2B ubiquitination, which indirectly triggers histone H4 'Lys-16' acetylation (H4K16ac), establishing a chromatin environment that promotes efficient activation of ATM kinase. Required in the testis, where it plays a role in the replacement of histones during spermatogenesis. At uncapped telomeres, promotes the joining of deprotected chromosome ends by inducing H2A ubiquitination and TP53BP1 recruitment, suggesting that it may enhance cancer development by aggravating telomere-induced genome instability in case of telomeric crisis. Promotes the assembly of RAD51 at DNA DSBs in the absence of BRCA1 and TP53BP1 Also involved in class switch recombination in immune system, via its role in regulation of DSBs repair. May be required for proper exit from mitosis after spindle checkpoint activation and may regulate cytokinesis. May play a role in the regulation of RXRA-mediated transcriptional activity. Not involved in RXRA ubiquitination by UBE2E2. The chain is E3 ubiquitin-protein ligase RNF8 from Bos taurus (Bovine).